A 342-amino-acid polypeptide reads, in one-letter code: tRNA N6-adenosine threonylcarbamoyltransferase (342 aa).

Fe cation-binding residues include H115 and H119. Residues 137–141, D170, G183, D187, and N276 each bind substrate; that span reads IVSGG. Residue D304 participates in Fe cation binding.

The protein belongs to the KAE1 / TsaD family. It depends on Fe(2+) as a cofactor.

The protein resides in the cytoplasm. It carries out the reaction L-threonylcarbamoyladenylate + adenosine(37) in tRNA = N(6)-L-threonylcarbamoyladenosine(37) in tRNA + AMP + H(+). Functionally, required for the formation of a threonylcarbamoyl group on adenosine at position 37 (t(6)A37) in tRNAs that read codons beginning with adenine. Is involved in the transfer of the threonylcarbamoyl moiety of threonylcarbamoyl-AMP (TC-AMP) to the N6 group of A37, together with TsaE and TsaB. TsaD likely plays a direct catalytic role in this reaction. In Staphylococcus haemolyticus (strain JCSC1435), this protein is tRNA N6-adenosine threonylcarbamoyltransferase.